The following is a 456-amino-acid chain: Equilibrative nucleoside transporter 2 (456 aa).

The chain crosses the membrane as a helical span at residues 13-33 (LVGISFFILGLGTLLPWNFFI). Asparagine 56 carries an N-linked (GlcNAc...) asparagine glycan. The next 5 membrane-spanning stretches (helical) occupy residues 69–89 (WVTL…SFLY), 98–118 (ILGS…LVKV), 123–143 (GLFF…CAVL), 161–181 (LFLS…LMSL), and 192–212 (LGYF…YLSL). A disordered region spans residues 248 to 277 (GVPISPQQASPTLDLDPEKEPEPEEPQKPG). Serine 252 is modified (phosphoserine). The span at 263–275 (DPEKEPEPEEPQK) shows a compositional bias: basic and acidic residues. A run of 5 helical transmembrane segments spans residues 288–308 (IWLT…VFPA), 323–343 (WGLF…DWLG), 360–380 (LLPL…LCHV), 396–416 (FITF…LTMC), and 432–452 (ALMT…SFLF).

Belongs to the SLC29A/ENT transporter (TC 2.A.57) family.

Its subcellular location is the apical cell membrane. The protein resides in the basolateral cell membrane. It is found in the nucleus membrane. It catalyses the reaction inosine(in) = inosine(out). The catalysed reaction is adenosine(in) = adenosine(out). It carries out the reaction uridine(out) = uridine(in). The enzyme catalyses thymidine(in) = thymidine(out). It catalyses the reaction hypoxanthine(out) = hypoxanthine(in). The catalysed reaction is adenine(out) = adenine(in). It carries out the reaction cytidine(in) = cytidine(out). The enzyme catalyses thymine(out) = thymine(in). It catalyses the reaction uracil(in) = uracil(out). The catalysed reaction is guanine(out) = guanine(in). It carries out the reaction guanosine(in) = guanosine(out). Its function is as follows. Bidirectional uniporter involved in the facilitative transport of nucleosides and nucleobases, and contributes to maintaining their cellular homeostasis. Functions as a Na(+)-independent, passive transporter. Involved in the transport of nucleosides such as inosine, adenosine, uridine, thymidine, cytidine and guanosine. Also able to transport purine nucleobases (hypoxanthine, adenine, guanine) and pyrimidine nucleobases (thymine, uracil). Involved in nucleoside transport at basolateral membrane of kidney cells, allowing liver absorption of nucleoside metabolites. Mediates apical nucleoside uptake into Sertoli cells, thereby regulating the transport of nucleosides in testis across the blood-testis-barrier. Mediates both the influx and efflux of hypoxanthine in skeletal muscle microvascular endothelial cells to control the amount of intracellular hypoxanthine available for xanthine oxidase-mediated ROS production. The polypeptide is Equilibrative nucleoside transporter 2 (Mus musculus (Mouse)).